Here is a 207-residue protein sequence, read N- to C-terminus: Methylated-DNA--protein-cysteine methyltransferase (207 aa).

Tyrosine 123 and arginine 137 together coordinate DNA. The active-site Nucleophile; methyl group acceptor is cysteine 154. A DNA-binding site is contributed by serine 160.

Belongs to the MGMT family.

It localises to the nucleus. It carries out the reaction a 6-O-methyl-2'-deoxyguanosine in DNA + L-cysteinyl-[protein] = S-methyl-L-cysteinyl-[protein] + a 2'-deoxyguanosine in DNA. It catalyses the reaction a 4-O-methyl-thymidine in DNA + L-cysteinyl-[protein] = a thymidine in DNA + S-methyl-L-cysteinyl-[protein]. Functionally, involved in the cellular defense against the biological effects of O6-methylguanine (O6-MeG) and O4-methylthymine (O4-MeT) in DNA. Repairs the methylated nucleobase in DNA by stoichiometrically transferring the methyl group to a cysteine residue in the enzyme. This is a suicide reaction: the enzyme is irreversibly inactivated. In Candida glabrata (strain ATCC 2001 / BCRC 20586 / JCM 3761 / NBRC 0622 / NRRL Y-65 / CBS 138) (Yeast), this protein is Methylated-DNA--protein-cysteine methyltransferase (MGT1).